Here is a 559-residue protein sequence, read N- to C-terminus: 2,3-bisphosphoglycerate-independent phosphoglycerate mutase (559 aa).

Asp-28 and Ser-81 together coordinate Mn(2+). Ser-81 serves as the catalytic Phosphoserine intermediate. Residues His-140, 170–171 (RD), Arg-206, Arg-213, 286–289 (RADR), and Lys-361 each bind substrate. Residues Asp-430, His-434, Asp-471, His-472, and His-501 each contribute to the Mn(2+) site.

The protein belongs to the BPG-independent phosphoglycerate mutase family. As to quaternary structure, monomer. The cofactor is Mn(2+). Post-translationally, the N-terminus is blocked. In terms of tissue distribution, found ubiquitously in germinating seed.

Its subcellular location is the cytoplasm. It carries out the reaction (2R)-2-phosphoglycerate = (2R)-3-phosphoglycerate. Its pathway is carbohydrate degradation; glycolysis; pyruvate from D-glyceraldehyde 3-phosphate: step 3/5. Catalyzes the interconversion of 2-phosphoglycerate and 3-phosphoglycerate. In Zea mays (Maize), this protein is 2,3-bisphosphoglycerate-independent phosphoglycerate mutase.